We begin with the raw amino-acid sequence, 186 residues long: Prorelaxin 1 (186 aa).

Positions M1–A22 are cleaved as a signal peptide. Cystine bridges form between C36-C173, C48-C186, and C172-C177. Residues S58–S158 constitute a propeptide, connecting peptide. Q163 carries the post-translational modification Pyrrolidone carboxylic acid.

The protein belongs to the insulin family. As to quaternary structure, heterodimer of a B chain and an A chain linked by two disulfide bonds.

The protein resides in the secreted. Functionally, relaxin is an ovarian hormone that acts with estrogen to produce dilatation of the birth canal in many mammals. The polypeptide is Prorelaxin 1 (Rln1) (Rattus norvegicus (Rat)).